The primary structure comprises 229 residues: 2-C-methyl-D-erythritol 4-phosphate cytidylyltransferase (229 aa).

It belongs to the IspD/TarI cytidylyltransferase family. IspD subfamily.

It carries out the reaction 2-C-methyl-D-erythritol 4-phosphate + CTP + H(+) = 4-CDP-2-C-methyl-D-erythritol + diphosphate. Its pathway is isoprenoid biosynthesis; isopentenyl diphosphate biosynthesis via DXP pathway; isopentenyl diphosphate from 1-deoxy-D-xylulose 5-phosphate: step 2/6. In terms of biological role, catalyzes the formation of 4-diphosphocytidyl-2-C-methyl-D-erythritol from CTP and 2-C-methyl-D-erythritol 4-phosphate (MEP). In Shouchella clausii (strain KSM-K16) (Alkalihalobacillus clausii), this protein is 2-C-methyl-D-erythritol 4-phosphate cytidylyltransferase.